The following is a 73-amino-acid chain: Large ribosomal subunit protein bL31 (73 aa).

This sequence belongs to the bacterial ribosomal protein bL31 family. Type A subfamily. In terms of assembly, part of the 50S ribosomal subunit.

Binds the 23S rRNA. This chain is Large ribosomal subunit protein bL31, found in Bartonella henselae (strain ATCC 49882 / DSM 28221 / CCUG 30454 / Houston 1) (Rochalimaea henselae).